The chain runs to 384 residues: SAGA complex subunit Spt3 (384 aa).

Belongs to the SPT3 family. As to quaternary structure, component of the Spt-Ada-Gcn5 acetyltransferase (SAGA) complex consisting of wda/Taf5L, Saf6, Taf9, Taf10b, Taf12, Ada1, Spt3, Spt7, Spt20, Sf3b3, Sf3b5, Nipped-A/Tra1, a histone acetyltransferase (HAT) module made up of Gcn5, Ada2b (Isoform B), Ada3 and Sgf29, and a deubiquitinase (DUB) module made up of not/nonstop, Sgf11 and e(y)2 tethered to SAGA by Atxn7. Taf5 and Taf10, which has partially redundant properties with Taf10b, may also be part of this complex.

The protein resides in the nucleus. It localises to the chromosome. Functionally, component of the transcription regulatory complex SAGA, a multiprotein complex that activates transcription by remodeling chromatin and mediating histone acetylation and deubiquitination. The SAGA complex predominantly acetylates histone H3. Required for oogenesis; involved in transcriptional activation. In Drosophila melanogaster (Fruit fly), this protein is SAGA complex subunit Spt3.